Here is a 233-residue protein sequence, read N- to C-terminus: Defense protein 3 (233 aa).

The first 17 residues, 1–17 (MFGKFVLLAVLLVGVNS), serve as a signal peptide directing secretion. The propeptide occupies 18–45 (RYVIIEDPVYYIEDHELPEQWTSSRVRR).

This sequence belongs to the attacin/sarcotoxin-2 family.

It localises to the secreted. Its function is as follows. Has antibacterial activity against both Gram-positive and Gram-negative bacteria. The protein is Defense protein 3 of Lonomia obliqua (Moth).